Consider the following 441-residue polypeptide: GTPase Der (441 aa).

2 consecutive EngA-type G domains span residues 3-167 (PLIA…PKGS) and 176-351 (TKIA…EQFA). GTP is bound by residues 9 to 16 (GRPNVGKS), 56 to 60 (DTGGF), 119 to 122 (NKID), 182 to 189 (GRPNVGKS), 229 to 233 (DTAGI), and 294 to 297 (NKWD). The 85-residue stretch at 352–436 (RRITTSDLNR…PMRLLFKGRE (85 aa)) folds into the KH-like domain.

It belongs to the TRAFAC class TrmE-Era-EngA-EngB-Septin-like GTPase superfamily. EngA (Der) GTPase family. In terms of assembly, associates with the 50S ribosomal subunit.

In terms of biological role, GTPase that plays an essential role in the late steps of ribosome biogenesis. This is GTPase Der from Geotalea uraniireducens (strain Rf4) (Geobacter uraniireducens).